The following is a 158-amino-acid chain: Phosphopantetheine adenylyltransferase (158 aa).

Threonine 9 contacts substrate. ATP is bound by residues 9 to 10 (TF) and histidine 17. Substrate-binding residues include lysine 41, leucine 73, and arginine 87. ATP contacts are provided by residues 88-90 (GVR), glutamate 98, and 123-129 (WSYVSST).

The protein belongs to the bacterial CoaD family. In terms of assembly, homohexamer. It depends on Mg(2+) as a cofactor.

The protein localises to the cytoplasm. The enzyme catalyses (R)-4'-phosphopantetheine + ATP + H(+) = 3'-dephospho-CoA + diphosphate. The protein operates within cofactor biosynthesis; coenzyme A biosynthesis; CoA from (R)-pantothenate: step 4/5. Reversibly transfers an adenylyl group from ATP to 4'-phosphopantetheine, yielding dephospho-CoA (dPCoA) and pyrophosphate. This is Phosphopantetheine adenylyltransferase from Histophilus somni (strain 2336) (Haemophilus somnus).